The sequence spans 712 residues: MVKLAKAGKNQGDPKKMAPPPKEVEEDSEDEEMSEDEEDDSSGEEVVIPQKKGKKAAATSAKKVVVSPTKKVAVATPAKKAAVTPGKKAAATPAKKTVTPAKAVTTPGKKGATPGKALVATPGKKGAAIPAKGAKNGKNAKKEDSDEEEEDDSEEDEDDDEDEDEDEDEIEPAAMKAAAAAPASEDEDDEDDEDDEDEDDDEEDDSEEEAMETTPAKGKKAAKVVPVKAKNVAEDEDEEEDDEDEDDDDDDDDDDEDDEDEDDEEEEEEEEEEPVKEAPGKRKKEMAKQKAAPEAKKQKVEGTEPTTAFNLFVGNLNFNKSAPELKTGISDVFAKNDLAVVDVRIGMTRKFGYVDFESAEDLEKALELTGLKVFGNEIKLEKPKGKDSKKERDARTLLAKNLPYKVTQDELKEVFEDAAEIRLVSKDGKSKGIAYIEFKTEADAEKTFEEKQGTEIDGRSISLYYTGEKGQNQDYRGGKNSTWSGESKTLVLSNLSYSATEETLQEVFEKATFIKVPQNQNGKSKGYAFIEFASFEDAKEALNSCNKREIEGRAIRLELQGPRGSPNARSQPSKTLFVKGLSEDTTEETLKESFDGSVRARIVTDRETGSSKGFGFVDFNSEEDAKAAKEAMEDGEIDGNKVTLDWAKPKGEGGFGGRGGGRGGFGGRGGGRGGRGGFGGRGRGGFGGRGGFRGGRGGGGDHKPQGKKTKFE.

Residues M1–P305 form a disordered region. K9, K15, and K16 each carry N6-acetyllysine. Positions V24 to G43 are enriched in acidic residues. Phosphoserine occurs at positions 28, 34, 41, and 42. Residues A56 to P107 are compositionally biased toward low complexity. The stretch at A58–V65 is repeat 1. Positions A58–K135 are 8 X 8 AA tandem repeats of X-T-P-X-K-K-X-X. At S67 the chain carries Phosphoserine. Phosphothreonine is present on residues T69, T76, T84, and T92. A run of 3 repeats spans residues A75–A82, V83–A90, and A91–V98. Residue K96 is modified to N6-acetyllysine. T99 is subject to Phosphothreonine. The stretch at T99–V104 is one 5; truncated repeat. N6-acetyllysine is present on K102. Residues T105–A112 form repeat 6. T106 carries the phosphothreonine modification. K109 carries the N6-acetyllysine modification. Phosphothreonine is present on T113. The residue at position 116 (K116) is an N6-acetyllysine. 2 tandem repeats follow at residues A120–A127 and A128–K135. T121 bears the Phosphothreonine mark. The segment covering P122–G137 has biased composition (low complexity). K124 is subject to N6-acetyllysine. Phosphoserine occurs at positions 145 and 153. Residues S145–E171 are compositionally biased toward acidic residues. Over residues P172 to A183 the composition is skewed to low complexity. A phosphoserine mark is found at S184 and S206. Residues S184–M211 are compositionally biased toward acidic residues. At T214 the chain carries Phosphothreonine. Residues E234–P274 show a composition bias toward acidic residues. The segment covering V275–G302 has biased composition (basic and acidic residues). Residue K299 forms a Glycyl lysine isopeptide (Lys-Gly) (interchain with G-Cter in SUMO1); alternate linkage. A Glycyl lysine isopeptide (Lys-Gly) (interchain with G-Cter in SUMO2); alternate cross-link involves residue K299. Phosphothreonine is present on T303. RRM domains lie at F309–G385 and R395–E468. K320 carries the N6-acetyllysine modification. K326 is covalently cross-linked (Glycyl lysine isopeptide (Lys-Gly) (interchain with G-Cter in SUMO1); alternate). A Glycyl lysine isopeptide (Lys-Gly) (interchain with G-Cter in SUMO2); alternate cross-link involves residue K326. At K350 the chain carries N6-acetyllysine. At S358 the chain carries Phosphoserine. A Phosphothreonine modification is found at T369. K372 is covalently cross-linked (Glycyl lysine isopeptide (Lys-Gly) (interchain with G-Cter in SUMO2)). Residue K379 forms a Glycyl lysine isopeptide (Lys-Gly) (interchain with G-Cter in SUMO2); alternate linkage. K379 is subject to N6-acetyllysine; alternate. N6-acetyllysine occurs at positions 400 and 405. Position 407 is a phosphothreonine (T407). 2 positions are modified to N6-acetyllysine: K429 and K446. Residues S460 and S462 each carry the phosphoserine modification. N6-acetyllysine occurs at positions 469 and 479. The 75-residue stretch at K488–P562 folds into the RRM 3 domain. K515 participates in a covalent cross-link: Glycyl lysine isopeptide (Lys-Gly) (interchain with G-Cter in SUMO2); alternate. K515 carries the N6-acetyllysine; alternate modification. Residue K523 is modified to N6-acetyllysine. S565 carries the phosphoserine modification. K574 carries the post-translational modification N6-acetyllysine. The 76-residue stretch at K574 to P649 folds into the RRM 4 domain. Residue K579 forms a Glycyl lysine isopeptide (Lys-Gly) (interchain with G-Cter in SUMO2); alternate linkage. K579 carries the post-translational modification N6-acetyllysine; alternate. Position 582 is a phosphoserine (S582). K591 is covalently cross-linked (Glycyl lysine isopeptide (Lys-Gly) (interchain with G-Cter in SUMO1); alternate). Residue K591 forms a Glycyl lysine isopeptide (Lys-Gly) (interchain with G-Cter in SUMO2); alternate linkage. A phosphoserine mark is found at S593 and S621. Residue K626 forms a Glycyl lysine isopeptide (Lys-Gly) (interchain with G-Cter in SUMO2) linkage. Residues V642–E712 form a disordered region. K648 is subject to N6-acetyllysine. The segment covering E652–G698 has biased composition (gly residues). Asymmetric dimethylarginine occurs at positions 658, 662, 668, 672, 675, 681, 683, 689, and 693. Position 696 is an asymmetric dimethylarginine; alternate (R696). R696 bears the Omega-N-methylarginine; alternate mark. The segment covering G699–E712 has biased composition (basic and acidic residues).

Identified in a IGF2BP1-dependent mRNP granule complex containing untranslated mRNAs. Component of the SWAP complex that consists of NPM1, NCL/nucleolin, PARP1 and SWAP70. Component of a complex which is at least composed of HTATSF1/Tat-SF1, the P-TEFb complex components CDK9 and CCNT1, RNA polymerase II, SUPT5H, and NCL/nucleolin. Interacts with AICDA. Interacts with APTX. Interacts with C1QBP. Interacts with ERBB4. Interacts (via C-terminus) with FMR1 isoform 6 (via N-terminus). Interacts with GZF1; this interaction is important for nucleolar localization of GZF1. Interacts with NSUN2. Interacts with NVL. Interacts (via N-terminus domain) with SETX. Interacts (via RRM1 and C-terminal RRM4/Arg/Gly-rich domains) with TERT; the interaction is important for nucleolar localization of TERT. Interacts with WDR46. Interacts with ZFP36. Interacts with LRRC34. Interacts with RRP1B. Interacts with HNRNPU; this interaction occurs during mitosis. Interacts with RIOK1; RIOK1 recruits NCL to the PRMT5 for symmetrically methylation. Interacts with ZBTB7B. Interacts with MDK; this interaction promotes NCL clustering and lateral movements of this complex into lipid rafts leading to MDK internalization. Interacts with HDGF. Interacts with ALKBH2. Interacts with IGFBP5; this interaction is necessary for IGFBP5 localization to the nucleus. Interacts with DDX24 (when ubiquitinated); this interaction may be important during ribosome biogenesis. Some glutamate residues are glycylated by TTLL8. This modification occurs exclusively on glutamate residues and results in a glycine chain on the gamma-carboxyl group. In terms of processing, symmetrically methylated by PRMT5.

It localises to the nucleus. Its subcellular location is the nucleolus. The protein localises to the cytoplasm. Nucleolin is the major nucleolar protein of growing eukaryotic cells. It is found associated with intranucleolar chromatin and pre-ribosomal particles. It induces chromatin decondensation by binding to histone H1. It is thought to play a role in pre-rRNA transcription and ribosome assembly. May play a role in the process of transcriptional elongation. Binds RNA oligonucleotides with 5'-UUAGGG-3' repeats more tightly than the telomeric single-stranded DNA 5'-TTAGGG-3' repeats. This Pongo abelii (Sumatran orangutan) protein is Nucleolin (NCL).